The chain runs to 80 residues: Putative membrane protein insertion efficiency factor (80 aa).

The disordered stretch occupies residues 61-80 (KTGKDPVPDHFSLKRNQEGE). The span at 62–80 (TGKDPVPDHFSLKRNQEGE) shows a compositional bias: basic and acidic residues.

This sequence belongs to the UPF0161 family.

Its subcellular location is the cell membrane. Functionally, could be involved in insertion of integral membrane proteins into the membrane. In Streptococcus pneumoniae serotype 2 (strain D39 / NCTC 7466), this protein is Putative membrane protein insertion efficiency factor.